The chain runs to 399 residues: Ornithine aminotransferase (399 aa).

Lys-255 carries the N6-(pyridoxal phosphate)lysine modification.

Belongs to the class-III pyridoxal-phosphate-dependent aminotransferase family. OAT subfamily. Pyridoxal 5'-phosphate serves as cofactor.

The protein localises to the cytoplasm. It catalyses the reaction a 2-oxocarboxylate + L-ornithine = L-glutamate 5-semialdehyde + an L-alpha-amino acid. The protein operates within amino-acid biosynthesis; L-proline biosynthesis; L-glutamate 5-semialdehyde from L-ornithine: step 1/1. Its function is as follows. Catalyzes the interconversion of ornithine to glutamate semialdehyde. This Brevibacillus brevis (strain 47 / JCM 6285 / NBRC 100599) protein is Ornithine aminotransferase.